The following is a 103-amino-acid chain: ATP synthase F(0) complex subunit g, mitochondrial (103 aa).

The residue at position 2 (alanine 2) is an N-acetylalanine. 4 positions are modified to N6-acetyllysine: lysine 11, lysine 24, lysine 35, and lysine 54.

Belongs to the ATPase g subunit family. As to quaternary structure, component of the ATP synthase complex composed at least of ATP5F1A/subunit alpha, ATP5F1B/subunit beta, ATP5MC1/subunit c (homooctomer), MT-ATP6/subunit a, MT-ATP8/subunit 8, ATP5ME/subunit e, ATP5MF/subunit f, ATP5MG/subunit g, ATP5MK/subunit k, ATP5MJ/subunit j, ATP5F1C/subunit gamma, ATP5F1D/subunit delta, ATP5F1E/subunit epsilon, ATP5PF/subunit F6, ATP5PB/subunit b, ATP5PD/subunit d, ATP5PO/subunit OSCP. ATP synthase complex consists of a soluble F(1) head domain (subunits alpha(3) and beta(3)) - the catalytic core - and a membrane F(0) domain - the membrane proton channel (subunits c, a, 8, e, f, g, k and j). These two domains are linked by a central stalk (subunits gamma, delta, and epsilon) rotating inside the F1 region and a stationary peripheral stalk (subunits F6, b, d, and OSCP).

It localises to the mitochondrion. It is found in the mitochondrion inner membrane. Its function is as follows. Subunit g, of the mitochondrial membrane ATP synthase complex (F(1)F(0) ATP synthase or Complex V) that produces ATP from ADP in the presence of a proton gradient across the membrane which is generated by electron transport complexes of the respiratory chain. ATP synthase complex consist of a soluble F(1) head domain - the catalytic core - and a membrane F(1) domain - the membrane proton channel. These two domains are linked by a central stalk rotating inside the F(1) region and a stationary peripheral stalk. During catalysis, ATP synthesis in the catalytic domain of F(1) is coupled via a rotary mechanism of the central stalk subunits to proton translocation. In vivo, can only synthesize ATP although its ATP hydrolase activity can be activated artificially in vitro. Part of the complex F(0) domain. The chain is ATP synthase F(0) complex subunit g, mitochondrial from Homo sapiens (Human).